The following is a 932-amino-acid chain: Isoleucine--tRNA ligase (932 aa).

The 'HIGH' region motif lies at 59-69; the sequence is PYANGTIHIGH. Glu562 contributes to the L-isoleucyl-5'-AMP binding site. Residues 603–607 carry the 'KMSKS' region motif; that stretch reads KMSKS. Lys606 is an ATP binding site. 4 residues coordinate Zn(2+): Cys899, Cys902, Cys915, and Cys918.

It belongs to the class-I aminoacyl-tRNA synthetase family. IleS type 1 subfamily. In terms of assembly, monomer. The cofactor is Zn(2+).

It localises to the cytoplasm. It carries out the reaction tRNA(Ile) + L-isoleucine + ATP = L-isoleucyl-tRNA(Ile) + AMP + diphosphate. In terms of biological role, catalyzes the attachment of isoleucine to tRNA(Ile). As IleRS can inadvertently accommodate and process structurally similar amino acids such as valine, to avoid such errors it has two additional distinct tRNA(Ile)-dependent editing activities. One activity is designated as 'pretransfer' editing and involves the hydrolysis of activated Val-AMP. The other activity is designated 'posttransfer' editing and involves deacylation of mischarged Val-tRNA(Ile). This is Isoleucine--tRNA ligase from Pasteurella multocida (strain Pm70).